The chain runs to 434 residues: Glutamate-1-semialdehyde 2,1-aminomutase (434 aa).

Lys274 is subject to N6-(pyridoxal phosphate)lysine.

Belongs to the class-III pyridoxal-phosphate-dependent aminotransferase family. HemL subfamily. In terms of assembly, homodimer. Pyridoxal 5'-phosphate serves as cofactor.

The protein resides in the cytoplasm. The enzyme catalyses (S)-4-amino-5-oxopentanoate = 5-aminolevulinate. It participates in porphyrin-containing compound metabolism; protoporphyrin-IX biosynthesis; 5-aminolevulinate from L-glutamyl-tRNA(Glu): step 2/2. The sequence is that of Glutamate-1-semialdehyde 2,1-aminomutase from Acidovorax ebreus (strain TPSY) (Diaphorobacter sp. (strain TPSY)).